The sequence spans 402 residues: Triose phosphate/phosphate translocator, non-green plastid, chloroplastic (402 aa).

The N-terminal 82 residues, Met1–Ala82, are a transit peptide targeting the chloroplast. The Chloroplast intermembrane segment spans residues Ala83–Lys98. Residues Val99–Tyr119 traverse the membrane as a helical segment. Positions Ile118–Val236 constitute an EamA domain. The Lumenal portion of the chain corresponds to Asn120–Met131. Residues Thr132–Asn152 form a helical membrane-spanning segment. Residues Leu153 to Ala209 are Chloroplast intermembrane-facing. The chain crosses the membrane as a helical span at residues Met210–Gly230. The Lumenal segment spans residues Val231–Thr278. The helical transmembrane segment at Leu279 to Ser298 threads the bilayer. Residues Glu299 to Val374 are Chloroplast intermembrane-facing. The helical transmembrane segment at Asn375–Arg394 threads the bilayer. Over Ile395–Ala402 the chain is Lumenal.

The protein belongs to the TPT transporter family. TPT (TC 2.A.7.9) subfamily. In terms of assembly, homodimer.

Its subcellular location is the plastid. The protein localises to the chloroplast membrane. Its function is as follows. Mediates the export of fixed carbons from the chloroplasts into the cytosol in the form of triose phosphates. The chain is Triose phosphate/phosphate translocator, non-green plastid, chloroplastic (NGTPT) from Brassica oleracea var. botrytis (Cauliflower).